The following is a 98-amino-acid chain: Aspartyl/glutamyl-tRNA(Asn/Gln) amidotransferase subunit C (98 aa).

It belongs to the GatC family. In terms of assembly, heterotrimer of A, B and C subunits.

It carries out the reaction L-glutamyl-tRNA(Gln) + L-glutamine + ATP + H2O = L-glutaminyl-tRNA(Gln) + L-glutamate + ADP + phosphate + H(+). The catalysed reaction is L-aspartyl-tRNA(Asn) + L-glutamine + ATP + H2O = L-asparaginyl-tRNA(Asn) + L-glutamate + ADP + phosphate + 2 H(+). Functionally, allows the formation of correctly charged Asn-tRNA(Asn) or Gln-tRNA(Gln) through the transamidation of misacylated Asp-tRNA(Asn) or Glu-tRNA(Gln) in organisms which lack either or both of asparaginyl-tRNA or glutaminyl-tRNA synthetases. The reaction takes place in the presence of glutamine and ATP through an activated phospho-Asp-tRNA(Asn) or phospho-Glu-tRNA(Gln). This Micrococcus luteus (strain ATCC 4698 / DSM 20030 / JCM 1464 / CCM 169 / CCUG 5858 / IAM 1056 / NBRC 3333 / NCIMB 9278 / NCTC 2665 / VKM Ac-2230) (Micrococcus lysodeikticus) protein is Aspartyl/glutamyl-tRNA(Asn/Gln) amidotransferase subunit C.